The following is a 353-amino-acid chain: Photosystem II D2 protein (353 aa).

An N-acetylthreonine modification is found at threonine 2. Threonine 2 bears the Phosphothreonine mark. A helical transmembrane segment spans residues 41–61 (CAYFALGGWFTGTTFVTSWYT). Histidine 118 provides a ligand contact to chlorophyll a. A helical membrane pass occupies residues 125–141 (GFMLRQFELARSVQLRP). Pheophytin a contacts are provided by glutamine 130 and asparagine 143. Residues 153 to 166 (VFVSVFLIYPLGQS) form a helical membrane-spanning segment. Position 198 (histidine 198) interacts with chlorophyll a. A helical membrane pass occupies residues 208-228 (AALLCAIHGATVENTLFEDGD). The a plastoquinone site is built by histidine 215 and phenylalanine 262. Fe cation is bound at residue histidine 215. Histidine 269 contributes to the Fe cation binding site. Residues 279-295 (GLWMSALGVVGLALNLR) traverse the membrane as a helical segment.

The protein belongs to the reaction center PufL/M/PsbA/D family. As to quaternary structure, PSII is composed of 1 copy each of membrane proteins PsbA, PsbB, PsbC, PsbD, PsbE, PsbF, PsbH, PsbI, PsbJ, PsbK, PsbL, PsbM, PsbT, PsbX, PsbY, PsbZ, Psb30/Ycf12, at least 3 peripheral proteins of the oxygen-evolving complex and a large number of cofactors. It forms dimeric complexes. It depends on The D1/D2 heterodimer binds P680, chlorophylls that are the primary electron donor of PSII, and subsequent electron acceptors. It shares a non-heme iron and each subunit binds pheophytin, quinone, additional chlorophylls, carotenoids and lipids. There is also a Cl(-1) ion associated with D1 and D2, which is required for oxygen evolution. The PSII complex binds additional chlorophylls, carotenoids and specific lipids. as a cofactor.

Its subcellular location is the plastid. It is found in the chloroplast thylakoid membrane. The catalysed reaction is 2 a plastoquinone + 4 hnu + 2 H2O = 2 a plastoquinol + O2. Photosystem II (PSII) is a light-driven water:plastoquinone oxidoreductase that uses light energy to abstract electrons from H(2)O, generating O(2) and a proton gradient subsequently used for ATP formation. It consists of a core antenna complex that captures photons, and an electron transfer chain that converts photonic excitation into a charge separation. The D1/D2 (PsbA/PsbD) reaction center heterodimer binds P680, the primary electron donor of PSII as well as several subsequent electron acceptors. D2 is needed for assembly of a stable PSII complex. The protein is Photosystem II D2 protein of Amborella trichopoda.